The primary structure comprises 262 residues: Polyamine aminopropyltransferase (262 aa).

The region spanning 1-249 (MWITQEITPY…DIHRAAFALP (249 aa)) is the PABS domain. An S-methyl-5'-thioadenosine-binding site is contributed by asparagine 29. A spermidine-binding site is contributed by aspartate 83. Aspartate 155 functions as the Proton acceptor in the catalytic mechanism.

The protein belongs to the spermidine/spermine synthase family. Homodimer or homotetramer.

It localises to the cytoplasm. The enzyme catalyses S-adenosyl 3-(methylsulfanyl)propylamine + putrescine = S-methyl-5'-thioadenosine + spermidine + H(+). The protein operates within amine and polyamine biosynthesis; spermidine biosynthesis; spermidine from putrescine: step 1/1. Catalyzes the irreversible transfer of a propylamine group from the amino donor S-adenosylmethioninamine (decarboxy-AdoMet) to putrescine (1,4-diaminobutane) to yield spermidine. The chain is Polyamine aminopropyltransferase from Helicobacter pylori (strain G27).